The sequence spans 366 residues: L-Ala-D/L-Glu epimerase (366 aa).

Residues R24, T135, and K160 each contribute to the substrate site. The Proton acceptor; specific for (R)-substrate epimerization role is filled by K162. Mg(2+)-binding residues include D191, E219, and D244. The active-site Proton acceptor; specific for (S)-substrate epimerization is the K268. Substrate contacts are provided by S296, I298, D321, and D323.

Belongs to the mandelate racemase/muconate lactonizing enzyme family. In terms of assembly, homooctamer; tetramer of dimers. It depends on Mg(2+) as a cofactor.

It carries out the reaction L-alanyl-L-glutamate = L-alanyl-D-glutamate. It participates in cell wall degradation; peptidoglycan degradation. Catalyzes the epimerization of L-Ala-D-Glu to L-Ala-L-Glu and has probably a role in the metabolism of the murein peptide, of which L-Ala-D-Glu is a component. Is also able to catalyze the reverse reaction and the epimerization of the other Ala-X dipeptides L-Ala-L-Asp, L-Ala-L-Leu, L-Ala-L-Met, and L-Ala-L-Ser. Is not able to epimerize other L-Ala-X dipeptides. Is also active with L-Ser-L-Glu and, oddly, L-Pro-L-Glu, but not with L-Glu-L-Glu, L-Lys-L-Glu, L-Lys-L-Ala, or D-Ala-D-Ala. This chain is L-Ala-D/L-Glu epimerase (ykfB), found in Bacillus subtilis (strain 168).